The following is a 426-amino-acid chain: Serine--tRNA ligase (426 aa).

Position 233-235 (233-235 (TAE)) interacts with L-serine. Residue 264–266 (RSE) coordinates ATP. E287 is an L-serine binding site. 351-354 (EISS) is an ATP binding site. Position 387 (S387) interacts with L-serine.

The protein belongs to the class-II aminoacyl-tRNA synthetase family. Type-1 seryl-tRNA synthetase subfamily. In terms of assembly, homodimer. The tRNA molecule binds across the dimer.

It is found in the cytoplasm. The catalysed reaction is tRNA(Ser) + L-serine + ATP = L-seryl-tRNA(Ser) + AMP + diphosphate + H(+). It catalyses the reaction tRNA(Sec) + L-serine + ATP = L-seryl-tRNA(Sec) + AMP + diphosphate + H(+). The protein operates within aminoacyl-tRNA biosynthesis; selenocysteinyl-tRNA(Sec) biosynthesis; L-seryl-tRNA(Sec) from L-serine and tRNA(Sec): step 1/1. Catalyzes the attachment of serine to tRNA(Ser). Is also able to aminoacylate tRNA(Sec) with serine, to form the misacylated tRNA L-seryl-tRNA(Sec), which will be further converted into selenocysteinyl-tRNA(Sec). This Pseudomonas savastanoi pv. phaseolicola (strain 1448A / Race 6) (Pseudomonas syringae pv. phaseolicola (strain 1448A / Race 6)) protein is Serine--tRNA ligase.